The primary structure comprises 663 residues: DNA topoisomerase 4 subunit B (663 aa).

Residues tyrosine 7, asparagine 47, aspartate 74, 114–120, and lysine 341 each bind ATP; that span reads GLHGVGA. The interval 386 to 416 is disordered; that stretch reads REAARKAREDARSGKKNKRKDTLLSGKLTPA. Residues 387-398 are compositionally biased toward basic and acidic residues; the sequence is EAARKAREDARS. The region spanning 424 to 538 is the Toprim domain; that stretch reads NELYLVEGDS…AGRVFIALPP (115 aa). The Mg(2+) site is built by glutamate 430, aspartate 503, and aspartate 505.

The protein belongs to the type II topoisomerase family. ParE type 2 subfamily. As to quaternary structure, heterotetramer composed of ParC and ParE. The cofactor is Mg(2+). Mn(2+) is required as a cofactor. It depends on Ca(2+) as a cofactor.

The enzyme catalyses ATP-dependent breakage, passage and rejoining of double-stranded DNA.. Its function is as follows. Topoisomerase IV is essential for chromosome segregation. It relaxes supercoiled DNA. Performs the decatenation events required during the replication of a circular DNA molecule. In Staphylococcus aureus (strain NCTC 8325 / PS 47), this protein is DNA topoisomerase 4 subunit B.